A 609-amino-acid chain; its full sequence is MEGKPMRRCTNIRPGETGMDVTSRCTLGDPNKLPEGVPQPARMPYISDKHPRQTLEVINLLRKHRELCDVVLVVGAKKIYAHRVILSACSPYFRAMFTGELAESRQTEVVIRDIDERAMELLIDFAYTSQITVEEGNVQTLLPAACLLQLAEIQEACCEFLKRQLDPSNCLGIRAFADTHSCRELLRIADKFTQHNFQEVMESEEFMLLPANQLIDIISSDELNVRSEEQVFNAVMAWVKYSIQERRPQLPQVLQHVRLPLLSPKFLVGTVGSDPLIKSDEECRDLVDEAKNYLLLPQERPLMQGPRTRPRKPIRCGEVLFAVGGWCSGDAISSVERYDPQTNEWRMVASMSKRRCGVGVSVLDDLLYAVGGHDGSSYLNSVERYDPKTNQWSSDVAPTSTCRTSVGVAVLGGFLYAVGGQDGVSCLNIVERYDPKENKWTRVASMSTRRLGVAVAVLGGFLYAVGGSDGTSPLNTVERYNPQENRWHTIAPMGTRRKHLGCAVYQDMIYAVGGRDDTTELSSAERYNPRTNQWSPVVAMTSRRSGVGLAVVNGQLMAVGGFDGTTYLKTIEVFDPDANTWRLYGGMNYRRLGGGVGVIKMTHCESHIW.

Residues 68-135 (CDVVLVVGAK…AYTSQITVEE (68 aa)) form the BTB domain. Residues 170–272 (CLGIRAFADT…SPKFLVGTVG (103 aa)) enclose the BACK domain. Kelch repeat units follow at residues 319 to 365 (VLFA…VLDD), 367 to 413 (LYAV…VLGG), 414 to 460 (FLYA…VLGG), 462 to 507 (LYAV…VYQD), 509 to 554 (IYAV…VVNG), and 556 to 601 (LMAV…VIKM).

Component of the BCR(KLHL20) E3 ubiquitin ligase complex, at least composed of CUL3, KLHL20 and RBX1. Interacts with PDZ-RhoGEF/ARHGEF11, DAPK1, PML and CORO7. Interacts with F-actin. Interacts with IFN-gamma (IFNG). Interacts (via kelch repeats) with IVNS1ABP (via kelch repeats); this interaction blocks the assembly of CUL3-KLHL20 complex.

The protein localises to the cytoplasm. The protein resides in the perinuclear region. It localises to the nucleus. Its subcellular location is the golgi apparatus. It is found in the trans-Golgi network. The protein localises to the cell projection. The protein resides in the axon. It localises to the dendrite. Its pathway is protein modification; protein ubiquitination. Its function is as follows. Substrate-specific adapter of a BCR (BTB-CUL3-RBX1) E3 ubiquitin-protein ligase complex involved in interferon response and anterograde Golgi to endosome transport. The BCR(KLHL20) E3 ubiquitin ligase complex mediates the ubiquitination of DAPK1, leading to its degradation by the proteasome, thereby acting as a negative regulator of apoptosis. The BCR(KLHL20) E3 ubiquitin ligase complex also specifically mediates 'Lys-33'-linked ubiquitination. Involved in anterograde Golgi to endosome transport by mediating 'Lys-33'-linked ubiquitination of CORO7, promoting interaction between CORO7 and EPS15, thereby facilitating actin polymerization and post-Golgi trafficking. Also acts as a regulator of endothelial migration during angiogenesis by controlling the activation of Rho GTPases. The BCR(KLHL20) E3 ubiquitin ligase complex acts as a regulator of neurite outgrowth by mediating ubiquitination and degradation of PDZ-RhoGEF/ARHGEF11. The chain is Kelch-like protein 20 (KLHL20) from Bos taurus (Bovine).